The primary structure comprises 362 residues: S-adenosylmethionine decarboxylase proenzyme (362 aa).

Catalysis depends on residues E11 and E14. S71 (schiff-base intermediate with substrate; via pyruvic acid) is an active-site residue. Position 71 is a pyruvic acid (Ser); by autocatalysis (S71). Residue C85 is the Proton donor; for catalytic activity of the active site. Catalysis depends on proton acceptor; for processing activity residues S234 and H247.

The protein belongs to the eukaryotic AdoMetDC family. It depends on pyruvate as a cofactor. Post-translationally, is synthesized initially as an inactive proenzyme. Formation of the active enzyme involves a self-maturation process in which the active site pyruvoyl group is generated from an internal serine residue via an autocatalytic post-translational modification. Two non-identical subunits are generated from the proenzyme in this reaction, and the pyruvate is formed at the N-terminus of the alpha chain, which is derived from the carboxyl end of the proenzyme. The post-translation cleavage follows an unusual pathway, termed non-hydrolytic serinolysis, in which the side chain hydroxyl group of the serine supplies its oxygen atom to form the C-terminus of the beta chain, while the remainder of the serine residue undergoes an oxidative deamination to produce ammonia and the pyruvoyl group blocking the N-terminus of the alpha chain.

The catalysed reaction is S-adenosyl-L-methionine + H(+) = S-adenosyl 3-(methylsulfanyl)propylamine + CO2. It participates in amine and polyamine biosynthesis; S-adenosylmethioninamine biosynthesis; S-adenosylmethioninamine from S-adenosyl-L-methionine: step 1/1. This chain is S-adenosylmethionine decarboxylase proenzyme (SAMDC), found in Ipomoea batatas (Sweet potato).